A 168-amino-acid polypeptide reads, in one-letter code: S-ribosylhomocysteine lyase (168 aa).

Fe cation-binding residues include H54, H58, and C128.

This sequence belongs to the LuxS family. As to quaternary structure, homodimer. It depends on Fe cation as a cofactor.

It catalyses the reaction S-(5-deoxy-D-ribos-5-yl)-L-homocysteine = (S)-4,5-dihydroxypentane-2,3-dione + L-homocysteine. Involved in the synthesis of autoinducer 2 (AI-2) which is secreted by bacteria and is used to communicate both the cell density and the metabolic potential of the environment. The regulation of gene expression in response to changes in cell density is called quorum sensing. Catalyzes the transformation of S-ribosylhomocysteine (RHC) to homocysteine (HC) and 4,5-dihydroxy-2,3-pentadione (DPD). The protein is S-ribosylhomocysteine lyase of Actinobacillus succinogenes (strain ATCC 55618 / DSM 22257 / CCUG 43843 / 130Z).